Consider the following 418-residue polypeptide: Glycine betaine transport ATP-binding protein OpuAA (418 aa).

Residues 34–270 (KTKKEILKAT…PSNEYVEKFV (237 aa)) enclose the ABC transporter domain. An ATP-binding site is contributed by 66 to 73 (GLSGSGKS). 2 consecutive CBS domains span residues 284–340 (IMKR…DLSL) and 344–403 (LNTE…INAE).

Belongs to the ABC transporter superfamily. The complex is composed of two ATP-binding proteins (OpuAA), two transmembrane proteins (OpuAB) and a solute-binding protein (OpuAC).

It carries out the reaction a quaternary ammonium(out) + ATP + H2O = a quaternary ammonium(in) + ADP + phosphate + H(+). Involved in a multicomponent binding-protein-dependent transport system for glycine betaine. Probably responsible for energy coupling to the transport system. This Bacillus subtilis (strain 168) protein is Glycine betaine transport ATP-binding protein OpuAA (opuAA).